A 536-amino-acid chain; its full sequence is DEAD-box ATP-dependent RNA helicase 26 (536 aa).

The disordered stretch occupies residues 1 to 44; the sequence is MMSGGPSDATHRKRRRRRGPKGSGVDGPSIPRAVTTNGAGPEEE. Residues 11–20 are compositionally biased toward basic residues; it reads HRKRRRRRGP. Residues 74–102 carry the Q motif motif; sequence TRFDQCPVSPLSLKAIKDAGYEKMTQVQE. The 178-residue stretch at 105-282 folds into the Helicase ATP-binding domain; that stretch reads LPIILQGEDV…HIAMKRGYKF (178 aa). Position 118-125 (118-125) interacts with ATP; sequence AKTGTGKT. A DEAD box motif is present at residues 230–233; sequence DEAD. The region spanning 316-466 is the Helicase C-terminal domain; sequence VLKKHIAEDA…SIQTGVKDAL (151 aa).

The protein belongs to the DEAD box helicase family.

The catalysed reaction is ATP + H2O = ADP + phosphate + H(+). This is DEAD-box ATP-dependent RNA helicase 26 from Oryza sativa subsp. japonica (Rice).